The primary structure comprises 526 residues: MGHGGEGMSLEFTPTWVVAGVCTVIVAISLAVERLLHYFGTVLKKKKQKPLYEALQKVKEELMLLGFISLLLTVFQGLISKFCVKENVLMHMLPCSLDSRREAGASEHKNVTAKEHFQTFLPIVGTTRRLLAEHAAVQVGYCSEKGKVPLLSLEALHHLHIFIFVLAISHVTFCVLTVIFGSTRIHQWKKWEDSIADEKFDPETALRKRRVTHVHNHAFIKEHFLGIGKDSVILGWTQSFLKQFYDSVTKSDYVTLRLGFIMTHCKGNPKLNFHKYMMRALEDDFKQVVGISWYLWIFVVIFLLLNVNGWHTYFWIAFIPFALLLAVGTKLEHVIAQLAHEVAEKHVAIEGDLVVKPSDEHFWFSKPQIVLYLIHFILFQNAFEIAFFFWIWVTYGFDSCIMGQVRYIVPRLVIGVFIQVLCSYSTLPLYAIVSQMGSSFKKAIFEENVQVGLVGWAQKVKQKRDLKAAASNGDEGSSQAGPGPDSGSGSAPAAGPGAGFAGIQLSRVTRNNAGDTNNEITPDHNN.

Over 1–11 (MGHGGEGMSLE) the chain is Extracellular. A helical transmembrane segment spans residues 12–32 (FTPTWVVAGVCTVIVAISLAV). Over 33-61 (ERLLHYFGTVLKKKKQKPLYEALQKVKEE) the chain is Cytoplasmic. A helical transmembrane segment spans residues 62-82 (LMLLGFISLLLTVFQGLISKF). Residues 83 to 160 (CVKENVLMHM…LSLEALHHLH (78 aa)) are Extracellular-facing. Residues 161–181 (IFIFVLAISHVTFCVLTVIFG) form a helical membrane-spanning segment. Residues 182 to 287 (STRIHQWKKW…MRALEDDFKQ (106 aa)) lie on the Cytoplasmic side of the membrane. The next 2 helical transmembrane spans lie at 288-308 (VVGI…LNVN) and 309-329 (GWHT…AVGT). Over 330-372 (KLEHVIAQLAHEVAEKHVAIEGDLVVKPSDEHFWFSKPQIVLY) the chain is Cytoplasmic. A helical transmembrane segment spans residues 373–393 (LIHFILFQNAFEIAFFFWIWV). Residues 394–412 (TYGFDSCIMGQVRYIVPRL) are Extracellular-facing. Residues 413–433 (VIGVFIQVLCSYSTLPLYAIV) form a helical membrane-spanning segment. Topologically, residues 434–526 (SQMGSSFKKA…NNEITPDHNN (93 aa)) are cytoplasmic. The segment at 447–468 (ENVQVGLVGWAQKVKQKRDLKA) is calmodulin-binding. Residues 471–526 (SNGDEGSSQAGPGPDSGSGSAPAAGPGAGFAGIQLSRVTRNNAGDTNNEITPDHNN) are disordered. Residues 476–495 (GSSQAGPGPDSGSGSAPAAG) show a composition bias toward low complexity. Polar residues predominate over residues 506–520 (SRVTRNNAGDTNNEI).

Belongs to the MLO family.

It is found in the cell membrane. Functionally, may be involved in modulation of pathogen defense and leaf cell death. Activity seems to be regulated by Ca(2+)-dependent calmodulin binding and seems not to require heterotrimeric G proteins. In Arabidopsis thaliana (Mouse-ear cress), this protein is MLO-like protein 1 (MLO1).